The primary structure comprises 195 residues: Phosphoheptose isomerase (195 aa).

The region spanning 37–195 (ISDSFKQHGK…IEFEMAKIRQ (159 aa)) is the SIS domain. Residue 52-54 (NGG) participates in substrate binding. Zn(2+)-binding residues include His-61 and Glu-65. Substrate-binding positions include Glu-65, 93–94 (ND), 119–121 (STS), Ser-124, and Gln-172. Gln-172 and His-180 together coordinate Zn(2+).

The protein belongs to the SIS family. GmhA subfamily. In terms of assembly, homotetramer. Requires Zn(2+) as cofactor.

The protein localises to the cytoplasm. The enzyme catalyses 2 D-sedoheptulose 7-phosphate = D-glycero-alpha-D-manno-heptose 7-phosphate + D-glycero-beta-D-manno-heptose 7-phosphate. Its pathway is carbohydrate biosynthesis; D-glycero-D-manno-heptose 7-phosphate biosynthesis; D-glycero-alpha-D-manno-heptose 7-phosphate and D-glycero-beta-D-manno-heptose 7-phosphate from sedoheptulose 7-phosphate: step 1/1. Its function is as follows. Catalyzes the isomerization of sedoheptulose 7-phosphate in D-glycero-D-manno-heptose 7-phosphate. This chain is Phosphoheptose isomerase, found in Histophilus somni (strain 2336) (Haemophilus somnus).